Consider the following 392-residue polypeptide: MDYCLQVAWIAGTKAITEQSNFMFSPLGLRAGLALLATGTDGETLRQLLAFLGSQHIHQLNAASAGLLAEMRAWPQLSFAAGIFVDRSLRLRPEFQSTAAAAHGAFPRSVDFQNQANAAAAEVNRFISQATNGRLNNTISPGTFGSSTKCVLANAMHFKATWGRKFESYDTQRRRFHRQDGTRVTVPFLSDPRTHYAARFDGLGFKVLQLFYKMVGHDGQVHFGAPCFCMLVFLPIKRDGLRHLLRMAVTEPDFVMRCVPRSEQEVSPCMVPKFKFSSELDARGALAKLGLGAPFDPLAADLSRMAVSVNTPPERLYVSAMRQKCAVEVDEEGTTAVEATYSCCSPTYSGPESPKPRPMSFVAEHPFMFAIVEYEKAQVLFLGHVMDPSNEE.

The RCL stretch occupies residues 333–357 (GTTAVEATYSCCSPTYSGPESPKPR).

The protein belongs to the serpin family.

This is Putative non-inhibitory serpin-10 from Oryza sativa subsp. japonica (Rice).